We begin with the raw amino-acid sequence, 146 residues long: Snaclec 5 (146 aa).

The first 23 residues, 1 to 23 (MGRFIFISFGLLVVFLSLSGTEA), serve as a signal peptide directing secretion. 3 disulfide bridges follow: Cys-25–Cys-36, Cys-53–Cys-142, and Cys-119–Cys-134. The region spanning 32 to 143 (YEGHCYRVFD…CRNYGHFVCK (112 aa)) is the C-type lectin domain.

The protein belongs to the snaclec family. As to quaternary structure, heterodimer; disulfide-linked. As to expression, expressed by the venom gland.

Its subcellular location is the secreted. Functionally, interferes with one step of hemostasis (modulation of platelet aggregation, or coagulation cascade, for example). The chain is Snaclec 5 from Echis pyramidum leakeyi (Leakey's carpet viper).